A 329-amino-acid polypeptide reads, in one-letter code: MPEPGPRMNGFSLGELCWLFCCPPCPSRIAAKLAFLPPEPTYTVLAPEQRGAGASAPAPAQATAAAAAAQPAPQQPEEGAGAGPGACSLHLSERADWQYSQRELDAVEVFFSRTARDNRLGCMFVRCAPSSRYTLLFSHGNAVDLGQMCSFYIGLGSRINCNIFSYDYSGYGVSSGKPSEKNLYADIDAAWQALRTRYGVSPENIILYGQSIGTVPTVDLASRYECAAVILHSPLMSGLRVAFPDTRKTYCFDAFPSIDKISKVTSPVLVIHGTEDEVIDFSHGLAMYERCPRAVEPLWVEGAGHNDIELYAQYLERLKQFISHELPNS.

Residues 53-79 show a composition bias toward low complexity; that stretch reads GASAPAPAQATAAAAAAQPAPQQPEEG. A disordered region spans residues 53–85; the sequence is GASAPAPAQATAAAAAAQPAPQQPEEGAGAGPG. Active-site charge relay system residues include S211, D276, and H305.

The protein belongs to the AB hydrolase superfamily. ABHD17 family. Post-translationally, palmitoylated on cysteine residues located in a cysteine cluster at the N-terminus which promotes membrane localization. Palmitoylation is required for post-synaptic localization and for depalmitoylating activity towards DLG4/PSD95.

It localises to the recycling endosome membrane. The protein resides in the cell projection. It is found in the dendritic spine. The protein localises to the postsynaptic density membrane. It catalyses the reaction S-hexadecanoyl-L-cysteinyl-[protein] + H2O = L-cysteinyl-[protein] + hexadecanoate + H(+). Its activity is regulated as follows. Inhibited by palmostatin-B. In terms of biological role, hydrolyzes fatty acids from S-acylated cysteine residues in proteins. Has depalmitoylating activity towards NRAS and DLG4/PSD95. In Homo sapiens (Human), this protein is Alpha/beta hydrolase domain-containing protein 17C.